Here is a 49-residue protein sequence, read N- to C-terminus: Large ribosomal subunit protein bL33 (49 aa).

Belongs to the bacterial ribosomal protein bL33 family.

This chain is Large ribosomal subunit protein bL33, found in Syntrophomonas wolfei subsp. wolfei (strain DSM 2245B / Goettingen).